Reading from the N-terminus, the 447-residue chain is Trimethylamine monooxygenase (447 aa).

Serine 13, glutamate 38, glutamine 40, leucine 46, tryptophan 47, and histidine 63 together coordinate FAD. Residues tryptophan 71 and asparagine 73 each coordinate NADP(+). Residues asparagine 73 and valine 126 each contribute to the FAD site. The NADP(+) site is built by tyrosine 173, alanine 205, serine 206, serine 208, and arginine 229. Residues glutamine 318 and threonine 321 each coordinate FAD. Arginine 413 lines the NADP(+) pocket.

The protein belongs to the FMO family. Requires FAD as cofactor.

It catalyses the reaction trimethylamine + NADPH + O2 = trimethylamine N-oxide + NADP(+) + H2O. Functionally, catalyzes the oxidation of trimethylamine (TMA) to produce trimethylamine N-oxide (TMAO). TMA is the best substrate, but the enzyme can also oxidize methimazole, indole and dimethylamine (DMA). This chain is Trimethylamine monooxygenase, found in Roseovarius nubinhibens (strain ATCC BAA-591 / DSM 15170 / ISM).